A 327-amino-acid chain; its full sequence is ATPase ASNA1 homolog (327 aa).

An ATP-binding site is contributed by 26–33 (KGGVGKTT). The active site involves Asp57. ATP is bound by residues Glu238 and Asn265. Zn(2+) is bound by residues Cys274 and Cys277.

Belongs to the arsA ATPase family. As to quaternary structure, homodimer.

It is found in the cytoplasm. Its subcellular location is the endoplasmic reticulum. ATPase required for the post-translational delivery of tail-anchored (TA) proteins to the endoplasmic reticulum. Recognizes and selectively binds the transmembrane domain of TA proteins in the cytosol. This complex then targets to the endoplasmic reticulum by membrane-bound receptors, where the tail-anchored protein is released for insertion. This process is regulated by ATP binding and hydrolysis. ATP binding drives the homodimer towards the closed dimer state, facilitating recognition of newly synthesized TA membrane proteins. ATP hydrolysis is required for insertion. Subsequently, the homodimer reverts towards the open dimer state, lowering its affinity for the membrane-bound receptor, and returning it to the cytosol to initiate a new round of targeting. In Entamoeba histolytica (strain ATCC 30459 / HM-1:IMSS / ABRM), this protein is ATPase ASNA1 homolog.